The following is a 205-amino-acid chain: Protein PYRAB00100 (205 aa).

Residues 7-201 (EWGEFLVRLA…EEYPRGPVRR (195 aa)) enclose the AMMECR1 domain.

In Pyrococcus abyssi (strain GE5 / Orsay), this protein is Protein PYRAB00100.